We begin with the raw amino-acid sequence, 426 residues long: Enolase (426 aa).

The tract at residues 38-60 (PSGASTGAHEAVEKRDGDKSRYG) is disordered. Over residues 47 to 58 (EAVEKRDGDKSR) the composition is skewed to basic and acidic residues. Residue Q163 coordinates (2R)-2-phosphoglycerate. E205 functions as the Proton donor in the catalytic mechanism. Mg(2+) is bound by residues D242, E285, and D312. (2R)-2-phosphoglycerate is bound by residues K337, R366, S367, and K388. The Proton acceptor role is filled by K337.

This sequence belongs to the enolase family. The cofactor is Mg(2+).

It localises to the cytoplasm. Its subcellular location is the secreted. It is found in the cell surface. It carries out the reaction (2R)-2-phosphoglycerate = phosphoenolpyruvate + H2O. It functions in the pathway carbohydrate degradation; glycolysis; pyruvate from D-glyceraldehyde 3-phosphate: step 4/5. Functionally, catalyzes the reversible conversion of 2-phosphoglycerate (2-PG) into phosphoenolpyruvate (PEP). It is essential for the degradation of carbohydrates via glycolysis. The sequence is that of Enolase from Caulobacter sp. (strain K31).